The sequence spans 255 residues: Small ribosomal subunit protein eS1 (255 aa).

Positions 1-18 (MAVGKNKRLSKGKKGLKK) are enriched in basic residues. Residues 1–28 (MAVGKNKRLSKGKKGLKKRTQDPFSRKD) are disordered. The residue at position 2 (A2) is an N-acetylalanine; partial. The span at 19–28 (RTQDPFSRKD) shows a compositional bias: basic and acidic residues.

Belongs to the eukaryotic ribosomal protein eS1 family. As to quaternary structure, component of the small ribosomal subunit. Mature ribosomes consist of a small (40S) and a large (60S) subunit. The 40S subunit contains about 33 different proteins and 1 molecule of RNA (18S). The 60S subunit contains about 49 different proteins and 3 molecules of RNA (25S, 5.8S and 5S).

It is found in the cytoplasm. In Ajellomyces dermatitidis (strain ER-3 / ATCC MYA-2586) (Blastomyces dermatitidis), this protein is Small ribosomal subunit protein eS1.